We begin with the raw amino-acid sequence, 348 residues long: Elongation factor Ts (348 aa).

The tract at residues 80-83 is involved in Mg(2+) ion dislocation from EF-Tu; sequence TDFV.

The protein belongs to the EF-Ts family.

The protein localises to the cytoplasm. Its function is as follows. Associates with the EF-Tu.GDP complex and induces the exchange of GDP to GTP. It remains bound to the aminoacyl-tRNA.EF-Tu.GTP complex up to the GTP hydrolysis stage on the ribosome. In Streptococcus mutans serotype c (strain ATCC 700610 / UA159), this protein is Elongation factor Ts.